Consider the following 1668-residue polypeptide: Kinesin-like protein KIF21B (1668 aa).

The 364-residue stretch at 8-371 (CVKVAVRIRP…LKYANRARNI (364 aa)) folds into the Kinesin motor domain. Residue 87-94 (GQTGAGKT) coordinates ATP. Residues 372 to 465 (KNKVVVNQDK…LMSQEANLLL (94 aa)) adopt a coiled-coil conformation. The segment at 401–1100 (MEYKAGKRVI…LQALIYNVQH (700 aa)) is interaction with TRIM3. 2 disordered regions span residues 553–629 (KKKE…PEEK) and 837–866 (RVGLKPPNMDSGAEVSASTTSSEAESGARS). Acidic residues predominate over residues 579–628 (NSEETDENEAEEEEEERDESGCEEEEGREDEDEDSGSEESLVDSDSDPEE). S580 is subject to Phosphoserine. T583 is modified (phosphothreonine). Low complexity predominate over residues 847–866 (SGAEVSASTTSSEAESGARS). Residues 924–1019 (IIDIVMQRMT…TKEELDSTDT (96 aa)) adopt a coiled-coil conformation. 3 positions are modified to phosphoserine: S1150, S1168, and S1217. The segment covering 1199–1219 (LPTRGSTFPRQSRGATDTSPL) has biased composition (polar residues). A disordered region spans residues 1199–1253 (LPTRGSTFPRQSRGATDTSPLTRRKSYDRGQPIRSTDMGFTPPSSPPTRPRNDRN). T1239 carries the post-translational modification Phosphothreonine. S1243 is modified (phosphoserine). 7 WD repeats span residues 1308-1345 (GHTKPILCLDATDELLFTGSKDRSCKMWNLVTGQEIAA), 1348-1386 (GHPNNVVSIKYCSHSGLVFSVSSSYIKVWDIRDSAKCIR), 1412-1450 (QGEHQINQMALSPSGSMLYVASGNAVRIWELNRFQPIGK), 1453-1495 (GHIG…TGTI), 1504-1541 (PHYDGIECLAIQGDILFSGSRDNGIKKWDLDQQELIQQ), 1545-1584 (AHKDWVCALAFVPGRPMLLSACRAGFIKVWNVDNFTPIGE), and 1587-1624 (GHDSPINAICTNSKHIFTASSDCRVKLWNYVPGLTPCL).

The protein belongs to the TRAFAC class myosin-kinesin ATPase superfamily. Kinesin family. Interacts with TRIM3; the interaction positively affects motility of KIF21B. Interacts with GABARAP and GABA(A) receptor subunits: GABRG2, GABRA1 and GABRA2. May interact with GABA(A) receptor subunits: GABRB2 and GABRB3. In terms of tissue distribution, expressed in brain (at protein level). Expressed in spleen and at lower levels in testes.

It localises to the cytoplasm. Its subcellular location is the cytoskeleton. It is found in the cell projection. The protein resides in the dendrite. The protein localises to the growth cone. It localises to the axon. Its subcellular location is the cytoplasmic vesicle. In terms of biological role, plus-end directed microtubule-dependent motor protein which displays processive activity. Is involved in regulation of microtubule dynamics, synapse function and neuronal morphology, including dendritic tree branching and spine formation. Plays a role in lerning and memory. Involved in delivery of gamma-aminobutyric acid (GABA(A)) receptor to cell surface. This Mus musculus (Mouse) protein is Kinesin-like protein KIF21B (Kif21b).